The chain runs to 1174 residues: Pesticidal crystal protein Cry1Fa (1174 aa).

This sequence belongs to the delta endotoxin family.

In terms of biological role, promotes colloidosmotic lysis by binding to the midgut epithelial cells of many lepidopteran larvae. In Bacillus thuringiensis subsp. aizawai, this protein is Pesticidal crystal protein Cry1Fa (cry1Fa).